A 152-amino-acid chain; its full sequence is Ribosome maturation factor RimP (152 aa).

The protein belongs to the RimP family.

It is found in the cytoplasm. Its function is as follows. Required for maturation of 30S ribosomal subunits. This Pseudomonas putida (strain GB-1) protein is Ribosome maturation factor RimP.